Here is a 172-residue protein sequence, read N- to C-terminus: Chromosome-anchoring protein RacA (172 aa).

The segment at residues 5-25 is a DNA-binding region (H-T-H motif); sequence TSDVAIRLGVSPKTIQRWVRK. 2 disordered regions span residues 57–76 and 142–172; these read AAMEAPPTPKRPPTPLRNNI and QLNNRPPSSHETSDEPKQKRRGLGRVMGLFA. Pro residues predominate over residues 62–71; the sequence is PPTPKRPPTP. The stretch at 83-146 forms a coiled coil; the sequence is ESIEPEIARV…ARLEQQLNNR (64 aa). The segment covering 142-151 has biased composition (polar residues); the sequence is QLNNRPPSSH.

It belongs to the RacA family.

It is found in the cytoplasm. Functionally, required for the formation of axial filaments and for anchoring the origin regions at the cell poles in sporulating cells, thus ensuring proper chromosome segregation in the prespore. Binds in a dispersed manner throughout the chromosome but preferentially to sites clustered in the origin portion of the chromosome, causing condensation of the chromosome and its remodeling into an elongated, anchored structure. The sequence is that of Chromosome-anchoring protein RacA from Geobacillus kaustophilus (strain HTA426).